A 453-amino-acid polypeptide reads, in one-letter code: Putative receptor-like protein kinase At2g30940 (453 aa).

Residues 60 to 80 form a helical membrane-spanning segment; sequence ASASIAFLLVLIISVLLCFIF. Thr-155 carries the phosphothreonine modification. Residues 166 to 428 form the Protein kinase domain; that stretch reads FADDNVITKG…IHMLQPHDLL (263 aa). ATP contacts are provided by residues 172-180 and Lys-194; that span reads ITKGDSSTV. Tyr-240 carries the post-translational modification Phosphotyrosine. Asp-293 acts as the Proton acceptor in catalysis. Residue Ser-297 is modified to Phosphoserine. The residue at position 322 (Thr-322) is a Phosphothreonine.

This sequence belongs to the protein kinase superfamily.

It is found in the cell membrane. It carries out the reaction L-seryl-[protein] + ATP = O-phospho-L-seryl-[protein] + ADP + H(+). It catalyses the reaction L-threonyl-[protein] + ATP = O-phospho-L-threonyl-[protein] + ADP + H(+). The chain is Putative receptor-like protein kinase At2g30940 from Arabidopsis thaliana (Mouse-ear cress).